Here is a 331-residue protein sequence, read N- to C-terminus: MATLSNHNQLDLSNGSHPEEYKIAALVFYSCIFLIGLFVNVTALWVFSCTTKKRTTVTIYMMNVALLDLVFILSLPFRMFYYAKGEWPFGEYFCHILGALVVFYPSLALWLLAFISADRYMAIVQPKYAKELKNTGKAVLACGGVWVMTLTTTVPLLLLYEDPDKASSPATCLKISDITHLKAVNVLNFTRLIFFFLIPLFIMIGCYVVIIHSLLRGQTSKLKPKVKEKSIRIIMTLLLQVLVCFVPFHICFAVLMLQGQENSYSPWGAFTTFLMNLSTCLDVVLYYIVSKQFQARVISVMLYRNYLRSVRRKSVRSGSLRSLSNMNSEML.

The Extracellular segment spans residues 1 to 26; the sequence is MATLSNHNQLDLSNGSHPEEYKIAAL. N-linked (GlcNAc...) asparagine glycosylation is present at N14. Residues 27–47 form a helical membrane-spanning segment; sequence VFYSCIFLIGLFVNVTALWVF. Over 48–56 the chain is Cytoplasmic; sequence SCTTKKRTT. A helical transmembrane segment spans residues 57–77; that stretch reads VTIYMMNVALLDLVFILSLPF. At 78–95 the chain is on the extracellular side; that stretch reads RMFYYAKGEWPFGEYFCH. Residues C94 and C172 are joined by a disulfide bond. The chain crosses the membrane as a helical span at residues 96 to 116; it reads ILGALVVFYPSLALWLLAFIS. Topologically, residues 117–138 are cytoplasmic; that stretch reads ADRYMAIVQPKYAKELKNTGKA. The chain crosses the membrane as a helical span at residues 139–159; the sequence is VLACGGVWVMTLTTTVPLLLL. At 160 to 191 the chain is on the extracellular side; it reads YEDPDKASSPATCLKISDITHLKAVNVLNFTR. N-linked (GlcNAc...) asparagine glycosylation is present at N188. Residues 192 to 212 traverse the membrane as a helical segment; the sequence is LIFFFLIPLFIMIGCYVVIIH. At 213 to 236 the chain is on the cytoplasmic side; it reads SLLRGQTSKLKPKVKEKSIRIIMT. The helical transmembrane segment at 237–257 threads the bilayer; the sequence is LLLQVLVCFVPFHICFAVLML. Residues 258–268 lie on the Extracellular side of the membrane; sequence QGQENSYSPWG. The chain crosses the membrane as a helical span at residues 269-289; it reads AFTTFLMNLSTCLDVVLYYIV. Over 290–331 the chain is Cytoplasmic; that stretch reads SKQFQARVISVMLYRNYLRSVRRKSVRSGSLRSLSNMNSEML. Residue S322 is modified to Phosphoserine.

The protein belongs to the G-protein coupled receptor 1 family. As to expression, expressed in the eye including cornea, retina, iris and ciliary epithelium (at protein level). Expressed in spleen, liver and lymphocytes with highest expression levels in intestinal intraepithelial lymphocytes.

The protein localises to the cell membrane. It is found in the cytoplasmic vesicle membrane. G protein-coupled receptor (GPCR) that plays a role in diverse physiological processes particularly within the immune and nervous systems. Becomes active when triggered by various endogenous ligands including endocannabinoid N-arachidonyl glycine (NAGly), delta-9-tetrahydrocannabinol or resolvin D2/RvD2 derived from the omega-3 fatty acid docosahexaenoic acid (DHA). Upon RvD2 binding, facilitates the resolution of inflammation, aiding in tissue repair and homeostasis. Mechanistically, RvD2 ligation initiates Galphas protein coupling, activation of cAMP-PKA signaling pathway and phosphorylation of STAT3, leading to RvD2-stimulated macrophage phagocytosis. Mediates NAGly-induced process of reorganization of actin filaments and induction of acrosomal exocytosis. Activation by N-arachidonoyl glycine (NAGly) can also induce apoptosis in macrophages. Plays a role in homeostasis of CD8+ subsets of intraepithelial lymphocytes (IELs) (CD8alphaalpha and CD8alphabeta IELs) in small intestine by supporting preferential migration of CD8alphaalpha T-cells to intraepithelial compartment over lamina propria compartment, and by mediating their reconstitution into small intestine after bone marrow transplant. Also participates in hypotensive responses, mediating reduction in intraocular and blood pressure. The sequence is that of N-arachidonyl glycine receptor from Mus musculus (Mouse).